Here is a 220-residue protein sequence, read N- to C-terminus: Large ribosomal subunit protein uL3 (220 aa).

A disordered region spans residues 126-158 (GFQGAIKRHGQSRGPMSHGSRYHRRPGSMGMAS).

Belongs to the universal ribosomal protein uL3 family. In terms of assembly, part of the 50S ribosomal subunit. Forms a cluster with proteins L14 and L19.

Its function is as follows. One of the primary rRNA binding proteins, it binds directly near the 3'-end of the 23S rRNA, where it nucleates assembly of the 50S subunit. The sequence is that of Large ribosomal subunit protein uL3 from Macrococcus caseolyticus (strain JCSC5402) (Macrococcoides caseolyticum).